Consider the following 101-residue polypeptide: Replication restart protein PriB (101 aa).

Residues 1-101 (MTTNSLVLSG…IHAENVELKT (101 aa)) enclose the SSB domain.

It belongs to the PriB family. In terms of assembly, homodimer. Interacts with PriA and DnaT. Component of the replication restart primosome. Primosome assembly occurs via a 'hand-off' mechanism. PriA binds to replication forks, subsequently PriB then DnaT bind; DnaT then displaces ssDNA to generate the helicase loading substrate.

Its function is as follows. Involved in the restart of stalled replication forks, which reloads the replicative helicase on sites other than the origin of replication; the PriA-PriB pathway is the major replication restart pathway. During primosome assembly it facilitates complex formation between PriA and DnaT on DNA; stabilizes PriA on DNA. Stimulates the DNA unwinding activity of PriA helicase. The sequence is that of Replication restart protein PriB from Shewanella putrefaciens (strain CN-32 / ATCC BAA-453).